The following is a 306-amino-acid chain: Glutathione transport system permease protein GsiC (306 aa).

Topologically, residues 1–8 (MLNYFIKR) are cytoplasmic. Residues 9–29 (LLGLIPTLLIVMVLVFLFVHL) traverse the membrane as a helical segment. The Periplasmic portion of the chain corresponds to 30-98 (LPGDPARLAA…QEIALRFMPT (69 aa)). The region spanning 95–292 (FMPTFWLTVC…LEFILINLLV (198 aa)) is the ABC transmembrane type-1 domain. Residues 99 to 119 (FWLTVCSMAWAVIFGMAIGIV) traverse the membrane as a helical segment. Residues 120 to 130 (SAVWRNGWPDR) are Cytoplasmic-facing. Residues 131 to 151 (IGMTLAVSGLSFPAFALGMLL) form a helical membrane-spanning segment. Topologically, residues 152 to 168 (MQIFSVELGWLPTVGAD) are periplasmic. Residues 169-189 (TWLHYILPSLTLGAAVAAVMA) form a helical membrane-spanning segment. Residues 190–228 (RFTRASFVDVLQEDYMRTARAKGVRESLVVLKHGLRNAL) are Cytoplasmic-facing. Residues 229 to 249 (IPVVTMMGLQFGFLLGGSIVV) traverse the membrane as a helical segment. Topologically, residues 250–278 (EKVFNWPGLGRLLVDSVEMRDYPVIQAEV) are periplasmic. A helical membrane pass occupies residues 279-299 (LLFSLEFILINLLVDMLYAAI). At 300 to 306 (NPAIRYK) the chain is on the cytoplasmic side.

It belongs to the binding-protein-dependent transport system permease family. As to quaternary structure, the complex is composed of two ATP-binding proteins (GsiA), two transmembrane proteins (GsiC and GsiD) and a solute-binding protein (GsiB).

Its subcellular location is the cell inner membrane. Functionally, part of the ABC transporter complex GsiABCD involved in glutathione import. Probably responsible for the translocation of the substrate across the membrane. The polypeptide is Glutathione transport system permease protein GsiC (Pectobacterium atrosepticum (strain SCRI 1043 / ATCC BAA-672) (Erwinia carotovora subsp. atroseptica)).